The following is a 1080-amino-acid chain: Myocardin-related transcription factor B (1080 aa).

The stretch at 40–65 is one RPEL 1 repeat; the sequence is EVLQLRLQQRRTREQLVDQGIMPPLK. The residue at position 66 (serine 66) is a Phosphoserine. 2 RPEL repeats span residues 84–109 and 128–153; these read NFLK…EETF and DDLN…PVDS. Disordered regions lie at residues 170–222, 234–311, 352–384, and 477–501; these read THGE…AQFT, TPLT…EPQM, PIKT…SSLD, and PHVE…LSTD. Polar residues-rich tracts occupy residues 188 to 200 and 240 to 259; these read QPAS…SAAS and QPPT…SSAK. A compositionally biased stretch (basic and acidic residues) spans 272–287; sequence NPNDKHRSKKCKDPKP. Residues 358–370 show a composition bias toward low complexity; it reads NSSSGSNSGSSSS. The SAP domain maps to 383–417; sequence LDDLKVSELKTELKLRGLPVSGTKPDLIERLKPYQ. Phosphoserine occurs at positions 531, 535, and 537. The stretch at 539 to 594 forms a coiled coil; that stretch reads SSSTLSTLELDAAEKDRKLQEKEKQIEELKRKLEQEQKLVEVLKMQLEVEKRGQQR. The interval 557–585 is required for interaction with itself and with MRTFA; sequence LQEKEKQIEELKRKLEQEQKLVEVLKMQL. Disordered stretches follow at residues 588-646 and 794-846; these read EKRG…SVGQ and LQYQ…PQQF. The span at 595–606 shows a compositional bias: pro residues; that stretch reads PPDPQPSDPPHP. Lysine 622 is covalently cross-linked (Glycyl lysine isopeptide (Lys-Gly) (interchain with G-Cter in SUMO1)). Residues 794–821 are compositionally biased toward polar residues; it reads LQYQRQPGPTNQQPFVSKTSNPALQSRT. Serine 913 carries the post-translational modification Phosphoserine. Positions 969–988 are disordered; it reads GTLPSATDTGPLQNSSEDRE. The span at 972–983 shows a compositional bias: polar residues; that stretch reads PSATDTGPLQNS.

Interacts with MRTFA and SRF. In terms of processing, O-glycosylated. As to expression, widely expressed. High expression in heart, brain and testis. Lower expression in lung, liver and kidney.

It localises to the nucleus. Acts as a transcriptional coactivator of serum response factor (SRF). Required for skeletal myogenic differentiation. The chain is Myocardin-related transcription factor B (Mrtfb) from Mus musculus (Mouse).